Here is a 279-residue protein sequence, read N- to C-terminus: tRNA dimethylallyltransferase (279 aa).

ATP is bound at residue 10–17; sequence GPTASGKS. Residue 12-17 participates in substrate binding; sequence TASGKS.

It belongs to the IPP transferase family. As to quaternary structure, monomer. It depends on Mg(2+) as a cofactor.

It carries out the reaction adenosine(37) in tRNA + dimethylallyl diphosphate = N(6)-dimethylallyladenosine(37) in tRNA + diphosphate. Functionally, catalyzes the transfer of a dimethylallyl group onto the adenine at position 37 in tRNAs that read codons beginning with uridine, leading to the formation of N6-(dimethylallyl)adenosine (i(6)A). The protein is tRNA dimethylallyltransferase of Roseobacter denitrificans (strain ATCC 33942 / OCh 114) (Erythrobacter sp. (strain OCh 114)).